The primary structure comprises 295 residues: Aspartate carbamoyltransferase catalytic subunit (295 aa).

Carbamoyl phosphate-binding residues include R49 and T50. K77 provides a ligand contact to L-aspartate. Residues R99, H127, and Q130 each coordinate carbamoyl phosphate. L-aspartate contacts are provided by R161 and R212. Positions 251 and 252 each coordinate carbamoyl phosphate.

It belongs to the aspartate/ornithine carbamoyltransferase superfamily. ATCase family. As to quaternary structure, heterododecamer (2C3:3R2) of six catalytic PyrB chains organized as two trimers (C3), and six regulatory PyrI chains organized as three dimers (R2).

It carries out the reaction carbamoyl phosphate + L-aspartate = N-carbamoyl-L-aspartate + phosphate + H(+). Its pathway is pyrimidine metabolism; UMP biosynthesis via de novo pathway; (S)-dihydroorotate from bicarbonate: step 2/3. In terms of biological role, catalyzes the condensation of carbamoyl phosphate and aspartate to form carbamoyl aspartate and inorganic phosphate, the committed step in the de novo pyrimidine nucleotide biosynthesis pathway. This Campylobacter jejuni subsp. jejuni serotype O:23/36 (strain 81-176) protein is Aspartate carbamoyltransferase catalytic subunit.